A 203-amino-acid polypeptide reads, in one-letter code: Early nodulin-like protein 9 (203 aa).

A signal peptide spans Met-1–Ala-27. Residues Arg-28–Ala-130 form the Phytocyanin domain. The cysteines at positions 84 and 118 are disulfide-linked. Asn-103 carries N-linked (GlcNAc...) asparagine glycosylation. A disordered region spans residues Gly-134–Ala-181. A lipid anchor (GPI-anchor amidated serine) is attached at Ser-180. Residues Ala-181–His-203 constitute a propeptide, removed in mature form.

It belongs to the early nodulin-like (ENODL) family. Specifically observed at the plasma membrane of sieve elements in vascular tissues of leaves, stems, roots, flowers and reproductive organs. Absent from companion cells.

The protein resides in the cell membrane. May act as a carbohydrate transporter. Mainly required for reproductive functions. In Arabidopsis thaliana (Mouse-ear cress), this protein is Early nodulin-like protein 9.